A 305-amino-acid chain; its full sequence is ATP synthase gamma chain (305 aa).

Belongs to the ATPase gamma chain family. In terms of assembly, F-type ATPases have 2 components, CF(1) - the catalytic core - and CF(0) - the membrane proton channel. CF(1) has five subunits: alpha(3), beta(3), gamma(1), delta(1), epsilon(1). CF(0) has three main subunits: a, b and c.

It localises to the cell membrane. Its function is as follows. Produces ATP from ADP in the presence of a proton gradient across the membrane. The gamma chain is believed to be important in regulating ATPase activity and the flow of protons through the CF(0) complex. The polypeptide is ATP synthase gamma chain (Streptomyces avermitilis (strain ATCC 31267 / DSM 46492 / JCM 5070 / NBRC 14893 / NCIMB 12804 / NRRL 8165 / MA-4680)).